The sequence spans 313 residues: 4-hydroxy-3-methylbut-2-enyl diphosphate reductase (313 aa).

A [4Fe-4S] cluster-binding site is contributed by Cys14. Residues His43 and His76 each coordinate (2E)-4-hydroxy-3-methylbut-2-enyl diphosphate. His43 and His76 together coordinate dimethylallyl diphosphate. Isopentenyl diphosphate-binding residues include His43 and His76. Cys98 is a binding site for [4Fe-4S] cluster. Position 126 (His126) interacts with (2E)-4-hydroxy-3-methylbut-2-enyl diphosphate. His126 provides a ligand contact to dimethylallyl diphosphate. Position 126 (His126) interacts with isopentenyl diphosphate. Catalysis depends on Glu128, which acts as the Proton donor. Thr166 provides a ligand contact to (2E)-4-hydroxy-3-methylbut-2-enyl diphosphate. Position 196 (Cys196) interacts with [4Fe-4S] cluster. (2E)-4-hydroxy-3-methylbut-2-enyl diphosphate contacts are provided by Ser224, Ser225, Asn226, and Ser269. Ser224, Ser225, Asn226, and Ser269 together coordinate dimethylallyl diphosphate. Residues Ser224, Ser225, Asn226, and Ser269 each coordinate isopentenyl diphosphate.

Belongs to the IspH family. The cofactor is [4Fe-4S] cluster.

It catalyses the reaction isopentenyl diphosphate + 2 oxidized [2Fe-2S]-[ferredoxin] + H2O = (2E)-4-hydroxy-3-methylbut-2-enyl diphosphate + 2 reduced [2Fe-2S]-[ferredoxin] + 2 H(+). It carries out the reaction dimethylallyl diphosphate + 2 oxidized [2Fe-2S]-[ferredoxin] + H2O = (2E)-4-hydroxy-3-methylbut-2-enyl diphosphate + 2 reduced [2Fe-2S]-[ferredoxin] + 2 H(+). Its pathway is isoprenoid biosynthesis; dimethylallyl diphosphate biosynthesis; dimethylallyl diphosphate from (2E)-4-hydroxy-3-methylbutenyl diphosphate: step 1/1. It participates in isoprenoid biosynthesis; isopentenyl diphosphate biosynthesis via DXP pathway; isopentenyl diphosphate from 1-deoxy-D-xylulose 5-phosphate: step 6/6. Its function is as follows. Catalyzes the conversion of 1-hydroxy-2-methyl-2-(E)-butenyl 4-diphosphate (HMBPP) into a mixture of isopentenyl diphosphate (IPP) and dimethylallyl diphosphate (DMAPP). Acts in the terminal step of the DOXP/MEP pathway for isoprenoid precursor biosynthesis. The chain is 4-hydroxy-3-methylbut-2-enyl diphosphate reductase from Tropheryma whipplei (strain TW08/27) (Whipple's bacillus).